A 61-amino-acid polypeptide reads, in one-letter code: Large ribosomal subunit protein uL30 (61 aa).

The protein belongs to the universal ribosomal protein uL30 family. As to quaternary structure, part of the 50S ribosomal subunit.

This is Large ribosomal subunit protein uL30 from Oenococcus oeni (strain ATCC BAA-331 / PSU-1).